The sequence spans 534 residues: UDP-glucuronosyltransferase 1A4 (534 aa).

The N-terminal stretch at 1 to 28 is a signal peptide; sequence MARGLQVPLPRLATGLLLLLSVQPWAES. N-linked (GlcNAc...) asparagine glycosylation is found at Asn119, Asn142, Asn296, and Asn348. A helical membrane pass occupies residues 492–508; the sequence is VIGFLLAVVLTVAFITF.

Belongs to the UDP-glycosyltransferase family. Homodimer. Homooligomer. Interacts with UGT1A1, UGT1A3, UGT1A6, UGT1A7, UGT1A8, UGT1A9 and UGT1A10 to form heterodimers. Isoform 1 interacts with isoform 2/i2 suggesting that oligomerization is involved in negative regulation of transferase activity by isoform 2. Isoform 1 also interacts with respective i2 isoforms of UGT1A1, UGT1A3, UGT1A6, UGT1A7, UGT1A8, UGT1A9 and UGT1A10. Expressed in liver. Expressed in kidney, colon and small intestine. Not expressed in esophagus. Not expressed in skin. In terms of tissue distribution, expressed in liver, kidney, colon, esophagus and small intestine.

It is found in the endoplasmic reticulum membrane. The enzyme catalyses glucuronate acceptor + UDP-alpha-D-glucuronate = acceptor beta-D-glucuronoside + UDP + H(+). It carries out the reaction calcidiol + UDP-alpha-D-glucuronate = calcidiol 25-O-(beta-D-glucuronide) + UDP + H(+). The catalysed reaction is calcidiol + UDP-alpha-D-glucuronate = calcidiol 3-O-(beta-D-glucuronide) + UDP + H(+). It catalyses the reaction calcitriol + UDP-alpha-D-glucuronate = calcitriol 25-O-(beta-D-glucuronide) + UDP + H(+). The enzyme catalyses (5Z,8Z,11Z,14Z)-eicosatetraenoate + UDP-alpha-D-glucuronate = O-[(5Z),(8Z),(11Z),(14Z)-eicosatetraenoyl]-beta-D-glucuronate + UDP. It carries out the reaction 15-hydroxy-(5Z,8Z,11Z,13E)-eicosatetraenoate + UDP-alpha-D-glucuronate = 15-O-(beta-D-glucuronosyl)-(5Z,8Z,11Z,14Z)-eicosatetraenoate + UDP + H(+). The catalysed reaction is 20-hydroxy-(5Z,8Z,11Z,14Z)-eicosatetraenoate + UDP-alpha-D-glucuronate = 20-O-(beta-D-glucuronosyl)-(5Z,8Z,11Z,14Z)-eicosatetraenoate + UDP + H(+). In terms of biological role, UDP-glucuronosyltransferase (UGT) that catalyzes phase II biotransformation reactions in which lipophilic substrates are conjugated with glucuronic acid to increase the metabolite's water solubility, thereby facilitating excretion into either the urine or bile. Essential for the elimination and detoxification of drugs, xenobiotics and endogenous compounds. Involved in the glucuronidation of calcidiol, which is the major circulating form of vitamin D3 essential for the regulation of calcium and phosphate homeostasis. Also glucuronidates the biologically active form of vitamin D3, calcitriol, probably leading to its biliary transport and intestinal reabsorption. Involved in the glucuronidation of arachidonic acid (AA) and AA-derived eicosanoids including 15-HETE, 20-HETE and PGB1. Lacks UDP-glucuronosyltransferase (UGT) activity but acts as a negative regulator of isoform 1. The protein is UDP-glucuronosyltransferase 1A4 of Homo sapiens (Human).